Reading from the N-terminus, the 367-residue chain is Probable butyrate kinase (367 aa).

The protein belongs to the acetokinase family.

The protein resides in the cytoplasm. The enzyme catalyses butanoate + ATP = butanoyl phosphate + ADP. The sequence is that of Probable butyrate kinase from Bacillus cereus (strain B4264).